The following is a 248-amino-acid chain: Pathogenesis-related thaumatin-like protein 3.4 (248 aa).

The signal sequence occupies residues 1 to 25 (MARAILWVLLTVMAVSLLLHAGVEG). Cystine bridges form between cysteine 34/cysteine 227, cysteine 75/cysteine 85, cysteine 90/cysteine 96, cysteine 141/cysteine 216, cysteine 146/cysteine 199, cysteine 154/cysteine 164, cysteine 168/cysteine 177, and cysteine 178/cysteine 186. The N-linked (GlcNAc...) asparagine glycan is linked to asparagine 235.

Belongs to the thaumatin family. In terms of tissue distribution, mainly expressed in male and female strobili, and, at lower levels, in roots of seedlings and saplings.

May be involved in disease resistance. This chain is Pathogenesis-related thaumatin-like protein 3.4, found in Cryptomeria japonica (Japanese cedar).